The sequence spans 459 residues: tRNA modification GTPase MnmE (459 aa).

Residues arginine 23, glutamate 85, and arginine 124 each contribute to the (6S)-5-formyl-5,6,7,8-tetrahydrofolate site. Residues 221–380 enclose the TrmE-type G domain; the sequence is GLSTAIIGRP…LEKAIADTFF (160 aa). Asparagine 231 contacts K(+). GTP contacts are provided by residues 231 to 236, 250 to 256, and 275 to 278; these read NVGKSS, TEIPGTT, and DTAG. Serine 235 provides a ligand contact to Mg(2+). K(+) contacts are provided by threonine 250, isoleucine 252, and threonine 255. Threonine 256 is a binding site for Mg(2+). Lysine 459 provides a ligand contact to (6S)-5-formyl-5,6,7,8-tetrahydrofolate.

The protein belongs to the TRAFAC class TrmE-Era-EngA-EngB-Septin-like GTPase superfamily. TrmE GTPase family. Homodimer. Heterotetramer of two MnmE and two MnmG subunits. K(+) is required as a cofactor.

The protein localises to the cytoplasm. In terms of biological role, exhibits a very high intrinsic GTPase hydrolysis rate. Involved in the addition of a carboxymethylaminomethyl (cmnm) group at the wobble position (U34) of certain tRNAs, forming tRNA-cmnm(5)s(2)U34. In Oceanobacillus iheyensis (strain DSM 14371 / CIP 107618 / JCM 11309 / KCTC 3954 / HTE831), this protein is tRNA modification GTPase MnmE.